Here is a 267-residue protein sequence, read N- to C-terminus: Tryptophan 2,3-dioxygenase (267 aa).

Substrate-binding positions include 44–48 (FITIH) and Arg-114. Residue His-225 participates in heme binding. Thr-239 serves as a coordination point for substrate.

Belongs to the tryptophan 2,3-dioxygenase family. Homotetramer. Heme serves as cofactor.

The catalysed reaction is L-tryptophan + O2 = N-formyl-L-kynurenine. It functions in the pathway amino-acid degradation; L-tryptophan degradation via kynurenine pathway; L-kynurenine from L-tryptophan: step 1/2. Functionally, heme-dependent dioxygenase that catalyzes the oxidative cleavage of the L-tryptophan (L-Trp) pyrrole ring and converts L-tryptophan to N-formyl-L-kynurenine. Catalyzes the oxidative cleavage of the indole moiety. The protein is Tryptophan 2,3-dioxygenase of Nocardioides sp. (strain ATCC BAA-499 / JS614).